A 206-amino-acid polypeptide reads, in one-letter code: Enterobactin synthase component D (206 aa).

Mg(2+) is bound by residues Asp-107, Glu-109, and Glu-152.

This sequence belongs to the P-Pant transferase superfamily. EntD family. In terms of assembly, entB, EntD, EntE, and EntF form a multienzyme complex called enterobactin synthase. Mg(2+) serves as cofactor.

The protein localises to the membrane. The catalysed reaction is apo-[aryl-carrier protein] + CoA = holo-[aryl-carrier protein] + adenosine 3',5'-bisphosphate + H(+). It catalyses the reaction apo-[peptidyl-carrier protein] + CoA = holo-[peptidyl-carrier protein] + adenosine 3',5'-bisphosphate + H(+). The protein operates within siderophore biosynthesis; enterobactin biosynthesis. Functionally, involved in the biosynthesis of the siderophore enterobactin (enterochelin), which is a macrocyclic trimeric lactone of N-(2,3-dihydroxybenzoyl)-serine. The serine trilactone serves as a scaffolding for the three catechol functionalities that provide hexadentate coordination for the tightly ligated iron(2+) atoms. Plays an essential role in the assembly of the enterobactin by catalyzing the transfer of the 4'-phosphopantetheine (Ppant) moiety from coenzyme A to the apo-domains of both EntB (ArCP domain) and EntF (PCP domain) to yield their holo-forms which make them competent for the activation of 2,3-dihydroxybenzoate (DHB) and L-serine, respectively. The chain is Enterobactin synthase component D from Escherichia coli O157:H7.